The sequence spans 378 residues: UDP-N-acetylglucosamine--N-acetylmuramyl-(pentapeptide) pyrophosphoryl-undecaprenol N-acetylglucosamine transferase (378 aa).

Residues 13-15, N124, R165, S193, and Q294 contribute to the UDP-N-acetyl-alpha-D-glucosamine site; that span reads TGG.

It belongs to the glycosyltransferase 28 family. MurG subfamily.

It localises to the cell inner membrane. It carries out the reaction di-trans,octa-cis-undecaprenyl diphospho-N-acetyl-alpha-D-muramoyl-L-alanyl-D-glutamyl-meso-2,6-diaminopimeloyl-D-alanyl-D-alanine + UDP-N-acetyl-alpha-D-glucosamine = di-trans,octa-cis-undecaprenyl diphospho-[N-acetyl-alpha-D-glucosaminyl-(1-&gt;4)]-N-acetyl-alpha-D-muramoyl-L-alanyl-D-glutamyl-meso-2,6-diaminopimeloyl-D-alanyl-D-alanine + UDP + H(+). It functions in the pathway cell wall biogenesis; peptidoglycan biosynthesis. Cell wall formation. Catalyzes the transfer of a GlcNAc subunit on undecaprenyl-pyrophosphoryl-MurNAc-pentapeptide (lipid intermediate I) to form undecaprenyl-pyrophosphoryl-MurNAc-(pentapeptide)GlcNAc (lipid intermediate II). This is UDP-N-acetylglucosamine--N-acetylmuramyl-(pentapeptide) pyrophosphoryl-undecaprenol N-acetylglucosamine transferase from Agrobacterium fabrum (strain C58 / ATCC 33970) (Agrobacterium tumefaciens (strain C58)).